A 755-amino-acid chain; its full sequence is Lysosome membrane protein 2-B (755 aa).

The Cytoplasmic segment spans residues Met1–Arg6. The helical transmembrane segment at Ile7–Val27 threads the bilayer. Residues Asn28, Asn76, Asn379, Asn465, Asn497, Asn588, Asn607, and Asn680 are each glycosylated (N-linked (GlcNAc...) asparagine). The Lumenal segment spans residues Asn28 to Ala727. A helical membrane pass occupies residues Ile728 to Val748. The Cytoplasmic segment spans residues Leu749–Leu755. Positions Ile752–Ile753 match the Di-leucine motif motif.

The protein belongs to the CD36 family. Post-translationally, heavily glycosylated.

The protein localises to the lysosome membrane. May act as a lysosomal receptor. May be involved in macropinocytosis and fluid phase exocytosis. This is Lysosome membrane protein 2-B (lmpB) from Dictyostelium discoideum (Social amoeba).